The sequence spans 71 residues: uncharacterized protein (71 aa).

Residues 5 to 22 (VVMCSGLFCSVFAGAFML) form a helical membrane-spanning segment.

It is found in the membrane. This is an uncharacterized protein from Bacillus subtilis (strain 168).